The following is a 227-amino-acid chain: Ribose-5-phosphate isomerase A (227 aa).

Substrate is bound by residues 26–29 (TGST), 82–85 (DGAD), and 95–98 (KGGG). The Proton acceptor role is filled by Glu-104. Position 122 (Lys-122) interacts with substrate.

Belongs to the ribose 5-phosphate isomerase family. As to quaternary structure, homodimer.

The catalysed reaction is aldehydo-D-ribose 5-phosphate = D-ribulose 5-phosphate. It functions in the pathway carbohydrate degradation; pentose phosphate pathway; D-ribose 5-phosphate from D-ribulose 5-phosphate (non-oxidative stage): step 1/1. Catalyzes the reversible conversion of ribose-5-phosphate to ribulose 5-phosphate. The protein is Ribose-5-phosphate isomerase A of Streptococcus equi subsp. zooepidemicus (strain MGCS10565).